A 359-amino-acid polypeptide reads, in one-letter code: Spermine synthase (359 aa).

The PABS domain maps to 53–304; the sequence is SGWFSEPHPR…GVIGFVLCST (252 aa). Q99 contributes to the S-adenosyl 3-(methylsulfanyl)propylamine binding site. Residue Y129 coordinates spermidine. Q130 serves as a coordination point for S-adenosyl 3-(methylsulfanyl)propylamine. D154 lines the spermidine pocket. S-adenosyl 3-(methylsulfanyl)propylamine contacts are provided by residues E174 and 205-206; that span reads DA. The Proton acceptor role is filled by D224. Putrescine is bound at residue Y292.

Belongs to the spermidine/spermine synthase family. As to quaternary structure, heterodimer. Component of a multiprotein complex. Interacts with SPDSYN1 and SPDSYN2. Expressed predominantly in stem internodes, flower buds and roots.

It carries out the reaction S-adenosyl 3-(methylsulfanyl)propylamine + spermidine = spermine + S-methyl-5'-thioadenosine + H(+). Its pathway is amine and polyamine biosynthesis; spermine biosynthesis; spermine from spermidine: step 1/1. This Arabidopsis thaliana (Mouse-ear cress) protein is Spermine synthase (SPMS).